Reading from the N-terminus, the 269-residue chain is Putative 6-phosphogluconolactonase (269 aa).

Positions 248–269 (DAATGVPDRDSSDSDSPPPFDG) are disordered.

This sequence belongs to the glucosamine/galactosamine-6-phosphate isomerase family. 6-phosphogluconolactonase subfamily.

It is found in the nucleus. It carries out the reaction 6-phospho-D-glucono-1,5-lactone + H2O = 6-phospho-D-gluconate + H(+). The protein operates within carbohydrate degradation; pentose phosphate pathway; D-ribulose 5-phosphate from D-glucose 6-phosphate (oxidative stage): step 2/3. Its function is as follows. Hydrolysis of 6-phosphogluconolactone to 6-phosphogluconate. In Caenorhabditis elegans, this protein is Putative 6-phosphogluconolactonase.